Consider the following 626-residue polypeptide: Anaphase-promoting complex subunit CDC23 (626 aa).

Ser59 is subject to Phosphoserine; by CDC28. TPR repeat units follow at residues 215-248 (ALLYYLRGVILKQEKNISKAMSSFLKSLSCYSFN), 295-328 (MIKFFKLKVFEELNGQLEDYFEDLEFLLQVFPNF), 329-362 (TFLKAYNATISYNNLDYVTAESRFDDIVKQDPYR), 363-396 (LNDLETYSNILYVMQKNSKLAYLAQFVSQIDRFR), 397-430 (PETCCIIANYYSARQEHEKSIMYFRRALTLDKKT), 431-464 (TNAWTLMGHEFVELSNSHAAIECYRRAVDICPRD), 465-498 (FKAWFGLGQAYALLDMHLYSLYYFQKACTLKPWD), 499-532 (RRIWQVLGECYSKTGNKVEAIKCYKRSIKASQTV), and 536-569 (TSIYYRLAQLYEELEDLQECKKFMMKCVDVEELL).

It belongs to the APC8/CDC23 family. The APC/C is composed of at least 13 subunits that stay tightly associated throughout the cell cycle: APC1, APC2, APC4, APC5, APC9, APC11, CDC16, CDC23, CDC26, CDC27, DOC1, MND2 and SWM1. CDC23 interacts directly with SWM1 and binds the destruction box (D-box) of the substrate cyclin CLB2. Post-translationally, phosphorylated by CDC28, which is required for the early mitotic activity of the APC/C in its CDC20-bound form.

It localises to the nucleus. The protein resides in the chromosome. Its subcellular location is the centromere. It is found in the kinetochore. The protein operates within protein modification; protein ubiquitination. Functionally, component of the anaphase promoting complex/cyclosome (APC/C), a cell cycle-regulated E3 ubiquitin-protein ligase complex that controls progression through mitosis and the G1 phase of the cell cycle. The APC/C is thought to confer substrate specificity and, in the presence of ubiquitin-conjugating E2 enzymes, it catalyzes the formation of protein-ubiquitin conjugates that are subsequently degraded by the 26S proteasome. In early mitosis, the APC/C is activated by CDC20 and targets securin PDS1, the B-type cyclin CLB5, and other anaphase inhibitory proteins for proteolysis, thereby triggering the separation of sister chromatids at the metaphase-to-anaphase transition. In late mitosis and in G1, degradation of CLB5 allows activation of the APC/C by CDH1, which is needed to destroy CDC20 and the B-type cyclin CLB2 to allow exit from mitosis and creating the low CDK state necessary for cytokinesis and for reforming prereplicative complexes in G1 prior to another round of replication. This chain is Anaphase-promoting complex subunit CDC23 (CDC23), found in Saccharomyces cerevisiae (strain ATCC 204508 / S288c) (Baker's yeast).